Consider the following 86-residue polypeptide: RNA-binding protein Hfq (86 aa).

The Sm domain occupies 9-68 (DIFLNVLRRERIQVSIYLFNGIKLQGHIESFDQFVIVLKNTISQMVYKHAVSTIVPSKFV).

This sequence belongs to the Hfq family. In terms of assembly, homohexamer.

Functionally, RNA chaperone that binds small regulatory RNA (sRNAs) and mRNAs to facilitate mRNA translational regulation in response to envelope stress, environmental stress and changes in metabolite concentrations. Also binds with high specificity to tRNAs. This chain is RNA-binding protein Hfq, found in Baumannia cicadellinicola subsp. Homalodisca coagulata.